Consider the following 1068-residue polypeptide: Tricorn protease homolog (1068 aa).

The interval Met61–Leu326 is six-bladed beta propeller. Residues Val338–Arg686 are seven-bladed beta propeller. The C-1 stretch occupies residues Glu692–Tyr762. The Charge relay system role is filled by His756. A PDZ-like region spans residues Ser771–Glu864. Residues Arg865–Leu1068 form a C-2 region. Gly927 is a binding site for substrate. Residue Ser974 is the Nucleophile of the active site. Glu1032 acts as the Charge relay system in catalysis.

Belongs to the peptidase S41B family.

The protein localises to the cytoplasm. Degrades oligopeptides in a sequential manner. In Saccharolobus solfataricus (strain ATCC 35092 / DSM 1617 / JCM 11322 / P2) (Sulfolobus solfataricus), this protein is Tricorn protease homolog (tri).